Reading from the N-terminus, the 539-residue chain is 2,3-bisphosphoglycerate-independent phosphoglycerate mutase (539 aa).

Mn(2+) contacts are provided by aspartate 37 and serine 86. Serine 86 is an active-site residue. Substrate contacts are provided by residues histidine 147, 177-178 (RD), arginine 210, arginine 216, 284-287 (RADR), and lysine 359. Mn(2+) contacts are provided by aspartate 426, histidine 430, aspartate 467, histidine 468, and histidine 485.

Belongs to the BPG-independent phosphoglycerate mutase family. It depends on Mg(2+) as a cofactor. Requires Mn(2+) as cofactor. Expressed ubiquitously. High expression levels in the nerve ring region, intestine and body wall muscles.

The enzyme catalyses (2R)-2-phosphoglycerate = (2R)-3-phosphoglycerate. It functions in the pathway carbohydrate degradation; glycolysis; pyruvate from D-glyceraldehyde 3-phosphate: step 3/5. Its activity is regulated as follows. Activity is not affected by 2,3-bisphosphoglycerate. Functionally, catalyzes the interconversion of 2-phosphoglycerate and 3-phosphoglycerate. This Caenorhabditis elegans protein is 2,3-bisphosphoglycerate-independent phosphoglycerate mutase.